Here is a 496-residue protein sequence, read N- to C-terminus: Guanosine-5'-triphosphate,3'-diphosphate pyrophosphatase (496 aa).

Belongs to the GppA/Ppx family. GppA subfamily.

It carries out the reaction guanosine 3'-diphosphate 5'-triphosphate + H2O = guanosine 3',5'-bis(diphosphate) + phosphate + H(+). It participates in purine metabolism; ppGpp biosynthesis; ppGpp from GTP: step 2/2. Its function is as follows. Catalyzes the conversion of pppGpp to ppGpp. Guanosine pentaphosphate (pppGpp) is a cytoplasmic signaling molecule which together with ppGpp controls the 'stringent response', an adaptive process that allows bacteria to respond to amino acid starvation, resulting in the coordinated regulation of numerous cellular activities. The protein is Guanosine-5'-triphosphate,3'-diphosphate pyrophosphatase of Aeromonas salmonicida (strain A449).